A 20-amino-acid chain; its full sequence is Lysozyme (20 aa).

In terms of assembly, monomer.

The protein resides in the secreted. The catalysed reaction is Hydrolysis of (1-&gt;4)-beta-linkages between N-acetylmuramic acid and N-acetyl-D-glucosamine residues in a peptidoglycan and between N-acetyl-D-glucosamine residues in chitodextrins.. In terms of biological role, has bacteriolytic activity. The polypeptide is Lysozyme (Lysobacter sp. (strain XL1)).